The primary structure comprises 205 residues: Urease accessory protein UreE (205 aa).

Positions 170–192 (EHHGHSHSHSHDHDHDHDHDHQH) are enriched in basic and acidic residues. Residues 170 to 205 (EHHGHSHSHSHDHDHDHDHDHQHGPCCSHGHHHGHR) form a disordered region.

This sequence belongs to the UreE family.

It localises to the cytoplasm. Involved in urease metallocenter assembly. Binds nickel. Probably functions as a nickel donor during metallocenter assembly. The chain is Urease accessory protein UreE from Burkholderia pseudomallei (strain 668).